Reading from the N-terminus, the 629-residue chain is 1-deoxy-D-xylulose-5-phosphate synthase (629 aa).

Residues histidine 85 and 126–128 contribute to the thiamine diphosphate site; that span reads GHS. A Mg(2+)-binding site is contributed by aspartate 157. Residues 158–159, asparagine 186, tyrosine 293, and glutamate 373 contribute to the thiamine diphosphate site; that span reads GS. Asparagine 186 contacts Mg(2+).

The protein belongs to the transketolase family. DXPS subfamily. As to quaternary structure, homodimer. Mg(2+) serves as cofactor. Requires thiamine diphosphate as cofactor.

It catalyses the reaction D-glyceraldehyde 3-phosphate + pyruvate + H(+) = 1-deoxy-D-xylulose 5-phosphate + CO2. The protein operates within metabolic intermediate biosynthesis; 1-deoxy-D-xylulose 5-phosphate biosynthesis; 1-deoxy-D-xylulose 5-phosphate from D-glyceraldehyde 3-phosphate and pyruvate: step 1/1. Functionally, catalyzes the acyloin condensation reaction between C atoms 2 and 3 of pyruvate and glyceraldehyde 3-phosphate to yield 1-deoxy-D-xylulose-5-phosphate (DXP). This Helicobacter hepaticus (strain ATCC 51449 / 3B1) protein is 1-deoxy-D-xylulose-5-phosphate synthase.